A 204-amino-acid chain; its full sequence is Transcription factor bHLH120 (204 aa).

2 disordered regions span residues 1-27 (MNPSNNPKKTRHQSHMPQERDETKKEK) and 93-116 (KREIGDPTSLTGSGSGSGSSRSEP). The region spanning 26–78 (EKKLLHRNIERQRRQEMAILFASLRSQLPLKYIKGKRAMSDHVNGAVSFIKDT) is the bHLH domain.

Homodimer.

Its subcellular location is the nucleus. In Arabidopsis thaliana (Mouse-ear cress), this protein is Transcription factor bHLH120 (BHLH120).